Consider the following 646-residue polypeptide: MLSVAQSSALFLLQAICILYITKLTIPTPVSEINLVRQSDCVCVPIISRSGTDYITCFNNCQIEPINTKLYNSTCTKMVNITLVRCNNEVYVMTLPNLVSNRSHSWEVLINYLLRFISAIIVYLLLSISKQGIFLFFSIVHYSFKFIKNKKSCNICGNDFYFIHIDCPKPDFTKRSDFHMMFYIILFLSLFFVVTHADDNVYNYYEHGDLTEIQLLDKEHYSQDFVSDGFLYNFYVENSHLIYDISNISTITRPVKHNEVTSTWSCDGSSGCYKDHVGKYNKKPDYVLKKVHDGFSCFFTTATICGTCKSEHIAIGDHVRVINVKPYIHIVVKTANKTDKIVIDEFNKFIHEPYYIKPITQIHIDQHDFLVTGSKVYQGTFCERPSKSCFGPNYITSDKTVTLHEPKIRDTFTHDREYIIDYCDYPSNSDLESLELTDMVHHSDKIYSPYDFGLISIGIPKLGYLAGGFCESLVSVKKIEVYGCYDCQNGVKISVTYESSDSCHTLICKHDSTTHRYFVQQHTTTLNFHSFMSKKDTIIECNQMRKALNLDESSETSVYFESNGVKGSAKEPVNFDFIKNLLYIDYKKIIFVFLVAIISIGIFLRSPYMLLSSILKFRKRRKVVATNRSEQLVMDDDVDVFIGPPS.

A signal peptide spans 1-25; it reads MLSVAQSSALFLLQAICILYITKLT. The Lumenal segment spans residues 26–119; the sequence is IPTPVSEINL…INYLLRFISA (94 aa). N-linked (GlcNAc...) asparagine; by host glycans are attached at residues Asn-72, Asn-80, and Asn-101. The chain crosses the membrane as a helical span at residues 120–140; sequence IIVYLLLSISKQGIFLFFSIV. The Cytoplasmic portion of the chain corresponds to 141–176; the sequence is HYSFKFIKNKKSCNICGNDFYFIHIDCPKPDFTKRS. A helical membrane pass occupies residues 177–197; it reads DFHMMFYIILFLSLFFVVTHA. Residues 198–588 are Lumenal-facing; the sequence is DDNVYNYYEH…KNLLYIDYKK (391 aa). Residues Asn-247 and Asn-336 are each glycosylated (N-linked (GlcNAc...) asparagine; by host). A helical membrane pass occupies residues 589 to 609; sequence IIFVFLVAIISIGIFLRSPYM. Topologically, residues 610-646 are cytoplasmic; the sequence is LLSSILKFRKRRKVVATNRSEQLVMDDDVDVFIGPPS.

In terms of assembly, G2 and G1 interact with each other. Post-translationally, specific enzymatic cleavages in vivo yield mature proteins including glycoprotein G1 and glycoprotein G2. In terms of processing, glycosylated. Glycosylation is essential for proper subcellular location.

The protein resides in the virion membrane. It localises to the host Golgi apparatus membrane. In terms of biological role, glycoprotein G2 and glycoprotein G1 interact with each other and are present at the surface of the virion. They are able to attach the virion to a cell receptor and to promote fusion of membranes after endocytosis of the virion. In European mountain ash ringspot-associated virus (isolate Sorbus aucuparia) (EMARAV), this protein is Envelope glycoprotein.